Reading from the N-terminus, the 1450-residue chain is Protein clueless (1450 aa).

Disordered regions lie at residues 1-126 (MALE…PGSE) and 266-287 (KTRP…VSEP). Low complexity predominate over residues 29 to 60 (NNSSAGKKQQQQQQPNQNQNLVNGNGNAADGP). Basic residues predominate over residues 62–71 (AKKKGKKNRN). At Ser-271 the chain carries Phosphoserine. Residues 425-667 (RAEDAFSSKL…RTFPPDVNFL (243 aa)) form the Clu domain. Basic and acidic residues-rich tracts occupy residues 725–734 (KQSEKTEEKA) and 743–765 (KESS…EEKQ). Disordered regions lie at residues 725–775 (KQSE…TKTA) and 959–1011 (PAVS…SDWT). Basic residues predominate over residues 968-983 (KKRSNGNKHNKHKSKG). A compositionally biased stretch (low complexity) spans 984 to 1008 (NKQQASGNQNGSSAGSSSGGSSSSS). 3 TPR repeats span residues 1102 to 1135 (AYNF…LNNV), 1228 to 1261 (ALID…NIKY), and 1263 to 1296 (GSKA…EKET). A disordered region spans residues 1410-1450 (NNNGDTEAETKDATKDNKDLAGASTQLTNGDKDAETAVASS). Basic and acidic residues predominate over residues 1417–1428 (AETKDATKDNKD).

This sequence belongs to the CLU family.

The protein localises to the cytoplasm. In terms of biological role, mRNA-binding protein involved in proper cytoplasmic distribution of mitochondria. This Drosophila ananassae (Fruit fly) protein is Protein clueless.